Reading from the N-terminus, the 196-residue chain is Imidazole glycerol phosphate synthase subunit HisH (196 aa).

The Glutamine amidotransferase type-1 domain occupies 2–196; the sequence is DVVILDTGCA…AQLMKNFLEM (195 aa). Catalysis depends on Cys-77, which acts as the Nucleophile. Active-site residues include His-178 and Glu-180.

As to quaternary structure, heterodimer of HisH and HisF.

Its subcellular location is the cytoplasm. The enzyme catalyses 5-[(5-phospho-1-deoxy-D-ribulos-1-ylimino)methylamino]-1-(5-phospho-beta-D-ribosyl)imidazole-4-carboxamide + L-glutamine = D-erythro-1-(imidazol-4-yl)glycerol 3-phosphate + 5-amino-1-(5-phospho-beta-D-ribosyl)imidazole-4-carboxamide + L-glutamate + H(+). The catalysed reaction is L-glutamine + H2O = L-glutamate + NH4(+). It participates in amino-acid biosynthesis; L-histidine biosynthesis; L-histidine from 5-phospho-alpha-D-ribose 1-diphosphate: step 5/9. IGPS catalyzes the conversion of PRFAR and glutamine to IGP, AICAR and glutamate. The HisH subunit catalyzes the hydrolysis of glutamine to glutamate and ammonia as part of the synthesis of IGP and AICAR. The resulting ammonia molecule is channeled to the active site of HisF. The sequence is that of Imidazole glycerol phosphate synthase subunit HisH from Yersinia pestis.